We begin with the raw amino-acid sequence, 524 residues long: Cytochrome P450 4F11 (524 aa).

A helical transmembrane segment spans residues 15 to 37 (AASPWLLLLLVGGSWLLARVLAW). Cysteine 45 and cysteine 260 each carry 4-hydroxynonenal-conjugated cysteine. Histidine 261 bears the 4-hydroxynonenal-conjugated histidine mark. Residue glutamate 328 coordinates heme. Histidine 347 carries the post-translational modification 4-hydroxynonenal-conjugated histidine. Cysteine 354 is subject to 4-hydroxynonenal-conjugated cysteine. Lysine 451 carries the 4-hydroxynonenal-conjugated lysine modification. Cysteine 468 provides a ligand contact to heme.

This sequence belongs to the cytochrome P450 family. Heme serves as cofactor. Post-translationally, 4-hydroxynonenal conjugation impairs substrate binding and the long-chain fatty acid omega-monooxygenase activity. As to expression, expressed mainly in human liver, followed by kidney, heart, and skeletal muscle.

It localises to the endoplasmic reticulum membrane. The protein localises to the microsome membrane. The catalysed reaction is an organic molecule + reduced [NADPH--hemoprotein reductase] + O2 = an alcohol + oxidized [NADPH--hemoprotein reductase] + H2O + H(+). It carries out the reaction an omega-methyl-long-chain fatty acid + reduced [NADPH--hemoprotein reductase] + O2 = an omega-hydroxy-long-chain fatty acid + oxidized [NADPH--hemoprotein reductase] + H2O + H(+). The enzyme catalyses dodecanoate + reduced [NADPH--hemoprotein reductase] + O2 = 12-hydroxydodecanoate + oxidized [NADPH--hemoprotein reductase] + H2O + H(+). It catalyses the reaction hexadecanoate + reduced [NADPH--hemoprotein reductase] + O2 = 16-hydroxyhexadecanoate + oxidized [NADPH--hemoprotein reductase] + H2O + H(+). The catalysed reaction is (9Z)-octadecenoate + reduced [NADPH--hemoprotein reductase] + O2 = 18-hydroxy-(9Z)-octadecenoate + oxidized [NADPH--hemoprotein reductase] + H2O + H(+). It carries out the reaction (5Z,8Z,11Z,14Z)-eicosatetraenoate + reduced [NADPH--hemoprotein reductase] + O2 = 20-hydroxy-(5Z,8Z,11Z,14Z)-eicosatetraenoate + oxidized [NADPH--hemoprotein reductase] + H2O + H(+). The enzyme catalyses (4Z,7Z,10Z,13Z,16Z,19Z)-docosahexaenoate + reduced [NADPH--hemoprotein reductase] + O2 = 22-hydroxy-(4Z,7Z,10Z,13Z,16Z,19Z)-docosahexaenoate + oxidized [NADPH--hemoprotein reductase] + H2O + H(+). It catalyses the reaction 8-hydroxy-(5Z,9E,11Z,14Z)-eicosatetraenoate + reduced [NADPH--hemoprotein reductase] + O2 = 8,20-dihydroxy-(5Z,9E,11Z,14Z)-eicosatetraenoate + oxidized [NADPH--hemoprotein reductase] + H2O + H(+). The catalysed reaction is 3-hydroxyhexadecanoate + reduced [NADPH--hemoprotein reductase] + O2 = 3,16-dihydroxyhexadecanoate + oxidized [NADPH--hemoprotein reductase] + H2O + H(+). It carries out the reaction 3-hydroxyoctadecanoate + reduced [NADPH--hemoprotein reductase] + O2 = 3,18-dihydroxyoctadecanoate + oxidized [NADPH--hemoprotein reductase] + H2O + H(+). The enzyme catalyses phylloquinone + reduced [NADPH--hemoprotein reductase] + O2 = omega-hydroxyphylloquinone + oxidized [NADPH--hemoprotein reductase] + H2O + H(+). It catalyses the reaction menaquinone-4 + reduced [NADPH--hemoprotein reductase] + O2 = omega-hydroxymenaquinone-4 + oxidized [NADPH--hemoprotein reductase] + H2O + H(+). The catalysed reaction is 2-hexyl-5-pentylresorcinol + reduced [NADPH--hemoprotein reductase] + O2 = 2-hexyl-5-(5-hydroxypentyl)resorcinol + oxidized [NADPH--hemoprotein reductase] + H2O + H(+). It carries out the reaction 2-hexyl-5-heptylresorcinol + reduced [NADPH--hemoprotein reductase] + O2 = 2-hexyl-5-(7-hydroxyheptyl)resorcinol + oxidized [NADPH--hemoprotein reductase] + H2O + H(+). The enzyme catalyses 12-hydroxy-(5Z,8Z,10E,14Z)-eicosatetraenoate + reduced [NADPH--hemoprotein reductase] + O2 = 12,20-dihydroxy-(5Z,8Z,10E,14Z)-eicosatetraenoate + oxidized [NADPH--hemoprotein reductase] + H2O + H(+). It catalyses the reaction 15-hydroxy-(5Z,8Z,11Z,13E)-eicosatetraenoate + reduced [NADPH--hemoprotein reductase] + O2 = 15,20-dihydroxy-(5Z,8Z,11Z,13E)-eicosatetraenoate + oxidized [NADPH--hemoprotein reductase] + H2O + H(+). Its pathway is lipid metabolism; arachidonate metabolism. The protein operates within lipid metabolism; oxylipin biosynthesis. It participates in cofactor degradation; phylloquinone degradation. It functions in the pathway xenobiotic degradation. Inhibition of the long-chain fatty acid omega-monooxygenase activity by 4-hydroxynonenal (4-HNE) conjugation. A cytochrome P450 monooxygenase involved in the metabolism of various endogenous substrates, including fatty acids and their oxygenated derivatives (oxylipins). Mechanistically, uses molecular oxygen inserting one oxygen atom into a substrate, and reducing the second into a water molecule, with two electrons provided by NADPH via cytochrome P450 reductase (CPR; NADPH-ferrihemoprotein reductase). Catalyzes with high efficiency the oxidation of the terminal carbon (omega-oxidation) of 3-hydroxy fatty acids, such as 3-hydroxyhexadecanoic and 3-hydroxyoctadecanoic acids, likely participating in the biosynthesis of long-chain 3-hydroxydicarboxylic acids. Omega-hydroxylates and inactivates phylloquinone (vitamin K1), and menaquinone-4 (MK-4, a form of vitamin K2), both acting as cofactors in blood coagulation. Metabolizes with low efficiciency fatty acids, including (5Z,8Z,11Z,14Z)-eicosatetraenoic acid (arachidonate) and its oxygenated metabolite 8-hydroxyeicosatetraenoic acid (8-HETE). Catalyzes N- and O-demethylation of drugs such as erythromycin, benzphetamine, ethylmorphine, chlorpromazine, imipramine and verapamil. Catalyzes the oxidation of dialkylresorcinol 2. This chain is Cytochrome P450 4F11, found in Homo sapiens (Human).